The chain runs to 457 residues: Chromosomal replication initiator protein DnaA (457 aa).

Residues Met-1 to Ala-90 form a domain I, interacts with DnaA modulators region. Positions Pro-91–Asp-112 are domain II. Residues Ser-113–Ala-323 are domain III, AAA+ region. Residues Gly-153, Gly-155, Lys-156, and Thr-157 each coordinate ATP. Residues Asn-324 to Glu-457 are domain IV, binds dsDNA.

The protein belongs to the DnaA family. Oligomerizes as a right-handed, spiral filament on DNA at oriC. Interacts via domain I with HobA. In a crystal with domains I and II of DnaA HobA forms tetramers with DnaA fragments bound at the dimer interface of the tetramer.

It is found in the cytoplasm. Its subcellular location is the cell inner membrane. Functionally, plays an essential role in the initiation and regulation of chromosomal replication. ATP-DnaA binds to the origin of replication (oriC) to initiate formation of the DNA replication initiation complex once per cell cycle. Binds the DnaA box (a 9 base pair repeat at the origin) and separates the double-stranded (ds)DNA. Forms a right-handed helical filament on oriC DNA; dsDNA binds to the exterior of the filament while single-stranded (ss)DNA is stabiized in the filament's interior. The ATP-DnaA-oriC complex binds and stabilizes one strand of the AT-rich DNA unwinding element (DUE), permitting loading of DNA polymerase. After initiation quickly degrades to an ADP-DnaA complex that is not apt for DNA replication. Binds acidic phospholipids. The DnaA box is 5'-TTATC[CA]A[CA]A-3' in this bacterium cycle. Multiple discrete DnaA-oriC complexes can be seen as DnaA levels increase. Binding of DnaA to oriC is increased by HobA; some chi-type structures can be seen by electron microscopy. Strand separation requires the DnaA boxes and adjacent DnaA-trio motifs but works equally well with ADP or ATP. The sequence is that of Chromosomal replication initiator protein DnaA from Helicobacter pylori (strain ATCC 700392 / 26695) (Campylobacter pylori).